The following is a 259-amino-acid chain: Ribonuclease HII (259 aa).

In terms of domain architecture, RNase H type-2 spans Thr-70–Glu-258. Residues Asp-76, Glu-77, and Asp-168 each coordinate a divalent metal cation.

The protein belongs to the RNase HII family. Requires Mn(2+) as cofactor. It depends on Mg(2+) as a cofactor.

It is found in the cytoplasm. It carries out the reaction Endonucleolytic cleavage to 5'-phosphomonoester.. Endonuclease that specifically degrades the RNA of RNA-DNA hybrids. The chain is Ribonuclease HII from Streptococcus pneumoniae (strain Hungary19A-6).